Here is a 127-residue protein sequence, read N- to C-terminus: uncharacterized protein (127 aa).

The signal sequence occupies residues 1–16 (MLKKIIFGITISLTTG). Cys17 is lipidated: N-palmitoyl cysteine. Cys17 carries S-diacylglycerol cysteine lipidation. Positions 56 to 101 (EVREEIQKYRVEIVDINKKKRELYNRLSKEAQSFLAEQQKYKQKLS) form a coiled coil. Residues 102 to 127 (IPKLLIENDPKNNTANSKDNNDKDMK) form a disordered region.

It is found in the cell membrane. This is an uncharacterized protein from Rickettsia prowazekii (strain Madrid E).